The following is a 348-amino-acid chain: Chitinase (348 aa).

A signal peptide spans 1 to 29 (MKLKKIIPAFPLLSTVAVGLWLTPTQASA). Positions 42 to 348 (KVLVGYWHNW…FATRYSNLVK (307 aa)) constitute a GH18 domain. Glu-161 (proton donor) is an active-site residue.

It belongs to the glycosyl hydrolase 18 family.

The protein localises to the secreted. The enzyme catalyses Random endo-hydrolysis of N-acetyl-beta-D-glucosaminide (1-&gt;4)-beta-linkages in chitin and chitodextrins.. It functions in the pathway glycan degradation; chitin degradation. Involved in chitin degradation. Catalyzes the cleavage of glycosidic linkages in chitooligosaccharides and in alpha- and beta-chitin. Its activity on chitooligosaccharides increases considerably with degrees of polymerization (the initial rate of hydrolysis for GlcNAc5 is about 130-fold higher than that for GlcNAc3). Its activity is greatly stimulated in the presence of the lytic chitin monooxygenase EfCBM33A, which attacks the crystalline structure of chitin and makes the polymer more accessible to the chitinase; combining the two enzymes leads to rapid and complete depolymerization of crystalline chitin, especially with beta-chitin as a substrate. Is likely involved in a chitin degradation pathway that allows E.faecalis V583 to grow on chitin as a carbon source. This Enterococcus faecalis (strain ATCC 700802 / V583) protein is Chitinase.